The chain runs to 182 residues: ATP-dependent protease subunit HslV (182 aa).

The active site involves T9. Na(+) contacts are provided by A167, C170, and T173.

Belongs to the peptidase T1B family. HslV subfamily. In terms of assembly, a double ring-shaped homohexamer of HslV is capped on each side by a ring-shaped HslU homohexamer. The assembly of the HslU/HslV complex is dependent on binding of ATP.

The protein resides in the cytoplasm. It catalyses the reaction ATP-dependent cleavage of peptide bonds with broad specificity.. Allosterically activated by HslU binding. Functionally, protease subunit of a proteasome-like degradation complex believed to be a general protein degrading machinery. This is ATP-dependent protease subunit HslV from Enterococcus faecalis (strain ATCC 700802 / V583).